The following is a 1010-amino-acid chain: MKAFFEKLLGFGPDRAIKQIEPIVRRINSLEPSVEALSNAELRAKTDEFKQRLADGETLDDLLPEAFAVVREAARRTIGQRHYDVQLIGGIVLHQGKIAEMKTGEGKTLVATLPLYLNALTGRGCHLVTVNDYLAKVGAGWMGPIYHLLGLSVATISHEYSAIYDPDYVDPKANPDDRRLVHWRPCSRREAYLADITYGTNNEFGFDYLRDNMAWDLAQLVQRELHYAIVDEVDNILIDEARTPLIISGPAQESGDEYRRFATLVRHLKPSPYTPDQIKKQMIEDPEGDFVIEPRSKSIQLTDQGVAKIERLLKIPEGESLYDPKYYRLTHYLDNALRAEFIYQRDRDYIVEHGEVIIVDEFTGRKMPGRRWSDGLHQAVEAKEGVKPRQENVTLATITFQNYFRMYQKLAGMTGTAYTEREEFAKIYNLEVVVIPTHRPMIRKDYDDQIYRSEKAKFEAVIREIEEMHAIGRPVLVGTTSVETSERLSEMLKRRGIKHEVLNAKYHEREARIVAQAGRKGAVTIATNMAGRGTDILLGGNPDGLIEEILAQRGIKIEQATPEQIRAAQEEARRITEAEGKEVRELGGLHIIGTERHESRRIDNQLRGRAGRQGDPGSSRFYLSLEDDLLRRFGPMDRVKGLMERLGVDDSLPIEAGLINRTIESAQTRVEGYNFDIRKHTVEFDDVMNKQRTVIYADRRRILEGENMRERVLDMIADEVHALVERYLPETKGRADDFEEWDIEGLVRAVRTIDPLLDETKLSPEQLEHLSRQEIEDAIMQAIEDDYQEREKAIGEENMRLVERRMMLSAIDRQWIDYLTGMEDLRQEIGLQAVAQRDPLIEYQRNAYAMFEELKANIQRDIVYQIIPVSFQYEQHLRQVEAEQQRRLLAAQQAGAADGNAKGARTVRHSVRLPGRNEPCPCGSGKKFKVCHWGREEELIALLQQRQTDQHAAVAADTPAQPAPQATATRPPTSQVPRGRAAPPPANPQPRSGKSPAQAPRGKGASARKK.

Residues Gln-86, 104-108, and Asp-535 each bind ATP; that span reads GEGKT. Residues 893 to 904 are compositionally biased toward low complexity; that stretch reads QAGAADGNAKGA. Positions 893–916 are disordered; the sequence is QAGAADGNAKGARTVRHSVRLPGR. Zn(2+) is bound by residues Cys-920, Cys-922, Cys-931, and His-932. Over residues 950–981 the composition is skewed to low complexity; it reads QHAAVAADTPAQPAPQATATRPPTSQVPRGRA. The segment at 950–1010 is disordered; sequence QHAAVAADTP…RGKGASARKK (61 aa).

The protein belongs to the SecA family. As to quaternary structure, monomer and homodimer. Part of the essential Sec protein translocation apparatus which comprises SecA, SecYEG and auxiliary proteins SecDF. Other proteins may also be involved. Zn(2+) serves as cofactor.

It localises to the cell membrane. It is found in the cytoplasm. The catalysed reaction is ATP + H2O + cellular proteinSide 1 = ADP + phosphate + cellular proteinSide 2.. Its function is as follows. Part of the Sec protein translocase complex. Interacts with the SecYEG preprotein conducting channel. Has a central role in coupling the hydrolysis of ATP to the transfer of proteins into and across the cell membrane, serving as an ATP-driven molecular motor driving the stepwise translocation of polypeptide chains across the membrane. This chain is Protein translocase subunit SecA, found in Roseiflexus sp. (strain RS-1).